The chain runs to 122 residues: Protein translocase subunit SecE (122 aa).

A run of 3 helical transmembrane segments spans residues 14–34 (LLKW…NQYF), 38–58 (PILY…FLAL), and 93–113 (LIVV…DSLL).

Belongs to the SecE/SEC61-gamma family. In terms of assembly, component of the Sec protein translocase complex. Heterotrimer consisting of SecY, SecE and SecG subunits. The heterotrimers can form oligomers, although 1 heterotrimer is thought to be able to translocate proteins. Interacts with the ribosome. Interacts with SecDF, and other proteins may be involved. Interacts with SecA.

The protein localises to the cell inner membrane. Functionally, essential subunit of the Sec protein translocation channel SecYEG. Clamps together the 2 halves of SecY. May contact the channel plug during translocation. The protein is Protein translocase subunit SecE of Pseudomonas aeruginosa (strain ATCC 15692 / DSM 22644 / CIP 104116 / JCM 14847 / LMG 12228 / 1C / PRS 101 / PAO1).